We begin with the raw amino-acid sequence, 262 residues long: MNKFLIIDGLNLVRRIYAAIPDETDMQSLTERVSSACTKLLRVHRPTHVAIVWDGDEISWRKQLYPNYKKGRKPMPEPLAQGLVALQDHLTAMHIGSIYAAAEADDVIATLAIKTAKAQGEAIIVSTDKGFSQLNHRQISQWDHFNQQYLDIAALEQKLGVERSQFLDLMALAGDSGNKIPGIAGIGPKSAAELLKTFRSLPTLFSSLSNLGAKQAKKLAEGKEMARLSYKLAQLQTDLPLNINLKDFRVIDSPPEKTINQD.

D105 provides a ligand contact to Mg(2+). The region spanning 162 to 257 (ERSQFLDLMA…FRVIDSPPEK (96 aa)) is the 5'-3' exonuclease domain. K(+)-binding residues include L172, A173, P181, I183, and I186. The interaction with DNA stretch occupies residues 185–190 (GIGPKS).

Belongs to the Xni family. It depends on Mg(2+) as a cofactor. K(+) serves as cofactor.

Its function is as follows. Has flap endonuclease activity. During DNA replication, flap endonucleases cleave the 5'-overhanging flap structure that is generated by displacement synthesis when DNA polymerase encounters the 5'-end of a downstream Okazaki fragment. This chain is Flap endonuclease Xni, found in Shewanella baltica (strain OS223).